The primary structure comprises 455 residues: Oxidative stress induced growth inhibitor homolog osgn-1 (455 aa).

The protein belongs to the OKL38 family. NADPH serves as cofactor.

It localises to the midbody. Its function is as follows. Monooxygenase catalytic activity. Involved in regulation of cytokinesis; promotes rho-1/RhoA activity, probably acting locally at the midbody in late cytokinesis. Monooxygenase activity is required to stabilize structures between primordial germ cells (PGCs), termed intercellular bridges. Dispensable for fertility. The sequence is that of Oxidative stress induced growth inhibitor homolog osgn-1 from Caenorhabditis elegans.